A 297-amino-acid chain; its full sequence is Homoserine kinase (297 aa).

79 to 89 (PIARGLGSSGA) is a binding site for ATP.

This sequence belongs to the GHMP kinase family. Homoserine kinase subfamily.

The protein resides in the cytoplasm. It carries out the reaction L-homoserine + ATP = O-phospho-L-homoserine + ADP + H(+). It participates in amino-acid biosynthesis; L-threonine biosynthesis; L-threonine from L-aspartate: step 4/5. Its function is as follows. Catalyzes the ATP-dependent phosphorylation of L-homoserine to L-homoserine phosphate. The chain is Homoserine kinase from Pyrobaculum neutrophilum (strain DSM 2338 / JCM 9278 / NBRC 100436 / V24Sta) (Thermoproteus neutrophilus).